The following is a 1055-amino-acid chain: Bifunctional fucokinase/GDP-fucose pyrophosphorylase (1055 aa).

A GDP-fucose pyrophosphorylase region spans residues 34-565; that stretch reads WDAIVLTAAS…SSQRVSLEEL (532 aa). The tract at residues 693–1055 is L-fucokinase; sequence GKSHSENHIS…VKVYNWSICI (363 aa). 826–836 lines the ATP pocket; the sequence is PRGSGLGTSSI.

This sequence belongs to the GHMP kinase family. Mn(2+) serves as cofactor. Requires Mg(2+) as cofactor. As to expression, ubiquitous. Highest expression in flower buds.

The enzyme catalyses L-fucose + ATP = beta-L-fucose 1-phosphate + ADP + H(+). It carries out the reaction beta-L-fucose 1-phosphate + GTP + H(+) = GDP-beta-L-fucose + diphosphate. Bifunctional enzyme involved in the salvage pathway which converts free L-fucose to GDP-L-fucose. Catalyzes two successive reactions, the ATP-dependent phosphorylation of L-fucose to L-fucose 1-phosphate, and its guanylylation to GDP-L-fucose. The sugar-1-kinase activity has a strict substrate specificity for L-fucose and ATP. The pyrophosphorylase activity has a strict substrate specificity for L-fucose 1-phosphate and GTP. The sequence is that of Bifunctional fucokinase/GDP-fucose pyrophosphorylase (FKGP) from Arabidopsis thaliana (Mouse-ear cress).